Reading from the N-terminus, the 128-residue chain is Aspartate 1-decarboxylase (128 aa).

S25 acts as the Schiff-base intermediate with substrate; via pyruvic acid in catalysis. At S25 the chain carries Pyruvic acid (Ser). Residue T57 participates in substrate binding. Y58 acts as the Proton donor in catalysis. Position 73–75 (73–75 (GSA)) interacts with substrate.

Belongs to the PanD family. Heterooctamer of four alpha and four beta subunits. Pyruvate is required as a cofactor. In terms of processing, is synthesized initially as an inactive proenzyme, which is activated by self-cleavage at a specific serine bond to produce a beta-subunit with a hydroxyl group at its C-terminus and an alpha-subunit with a pyruvoyl group at its N-terminus.

Its subcellular location is the cytoplasm. The enzyme catalyses L-aspartate + H(+) = beta-alanine + CO2. It participates in cofactor biosynthesis; (R)-pantothenate biosynthesis; beta-alanine from L-aspartate: step 1/1. Its function is as follows. Catalyzes the pyruvoyl-dependent decarboxylation of aspartate to produce beta-alanine. In Burkholderia vietnamiensis (strain G4 / LMG 22486) (Burkholderia cepacia (strain R1808)), this protein is Aspartate 1-decarboxylase.